The primary structure comprises 308 residues: N-acetylmuramic acid 6-phosphate etherase (308 aa).

An SIS domain is found at 59 to 222 (TAERLRHGGR…STGVMVKLGK (164 aa)). E87 functions as the Proton donor in the catalytic mechanism. E118 is a catalytic residue.

Belongs to the GCKR-like family. MurNAc-6-P etherase subfamily. In terms of assembly, homodimer.

The catalysed reaction is N-acetyl-D-muramate 6-phosphate + H2O = N-acetyl-D-glucosamine 6-phosphate + (R)-lactate. It functions in the pathway amino-sugar metabolism; N-acetylmuramate degradation. In terms of biological role, specifically catalyzes the cleavage of the D-lactyl ether substituent of MurNAc 6-phosphate, producing GlcNAc 6-phosphate and D-lactate. The protein is N-acetylmuramic acid 6-phosphate etherase of Nostoc punctiforme (strain ATCC 29133 / PCC 73102).